Reading from the N-terminus, the 641-residue chain is uncharacterized protein (641 aa).

Ser112 is subject to Phosphoserine. Disordered regions lie at residues 118–243 (STSI…LDPT), 261–289 (KSPRPIQSTRVGLRTHSRQASSAGDTVSI), 355–386 (DKSDGDQREEDCVREGISVRSSSPTSPTRLEA), and 404–430 (DGEGLTTESDVSEPPGTSSSAAVQSHS). A compositionally biased stretch (polar residues) spans 132 to 162 (ASVSSQYPHRTFQKQVNKTCVSKSDGPSGNG). Phosphoserine is present on Ser198. 2 stretches are compositionally biased toward polar residues: residues 222 to 234 (NQELPGSSVSRSN) and 278 to 289 (RQASSAGDTVSI). Residues 355 to 368 (DKSDGDQREEDCVR) show a composition bias toward basic and acidic residues. 2 stretches are compositionally biased toward low complexity: residues 374–383 (RSSSPTSPTR) and 421–430 (SSSAAVQSHS).

This is an uncharacterized protein from Mus musculus (Mouse).